The chain runs to 35 residues: Cecropin-A (35 aa).

Leu35 is subject to Leucine amide.

In terms of assembly, monomer. As to expression, hemolymph.

It localises to the secreted. Its function is as follows. Cecropins have lytic and antibacterial activity against several Gram-positive and Gram-negative bacteria. Also has activity against fungi. The protein is Cecropin-A of Heliothis virescens (Tobacco budworm moth).